The chain runs to 572 residues: Mitochondrial chaperone TCM62 (572 aa).

The N-terminal 16 residues, 1–16, are a transit peptide targeting the mitochondrion; the sequence is MLRNCLRKLGNHQTKC. Topologically, residues 17–471 are mitochondrial matrix; the sequence is SVKTLHTPIY…KANEPNFMTK (455 aa). Residues 472–488 form a helical membrane-spanning segment; sequence VGINAVLSAVILPSEVA. Topologically, residues 489–572 are mitochondrial intermembrane; it reads FKNAYGYNYY…VYKKPERHKA (84 aa).

Belongs to the chaperonin (HSP60) family. Forms a high molecular mass protein complex of approximately 850 kDa.

Its subcellular location is the mitochondrion inner membrane. Functionally, chaperone. Required for the assembly of succinate dehydrogenase subunits. Ensures mitochondrial gene expression at elevated temperatures and prevents heat-aggregation of the ribosomal subunit VAR1. This chain is Mitochondrial chaperone TCM62 (TCM62), found in Saccharomyces cerevisiae (strain ATCC 204508 / S288c) (Baker's yeast).